Here is a 105-residue protein sequence, read N- to C-terminus: Thioredoxin (105 aa).

Positions 2–105 (VKQIESKYAF…KLEATINELI (104 aa)) constitute a Thioredoxin domain. Lys-3 is subject to N6-acetyllysine. Residue Lys-8 is modified to N6-succinyllysine. Residues Cys-32 and Cys-35 each act as nucleophile in the active site. The cysteines at positions 32 and 35 are disulfide-linked. Lys-39 carries the post-translational modification N6-acetyllysine. Cys-62 and Cys-69 each carry S-nitrosocysteine. Cys-73 is modified (S-nitrosocysteine; alternate). The residue at position 94 (Lys-94) is an N6-acetyllysine; alternate. An N6-succinyllysine; alternate modification is found at Lys-94.

The protein belongs to the thioredoxin family. Homodimer; disulfide-linked. Interacts with TXNIP through the redox-active site. Interacts with MAP3K5 and CASP3. Interacts with APEX1; the interaction stimulates the FOS/JUN AP-1 DNA-binding activity in a redox-dependent manner. Post-translationally, in the fully reduced protein, both Cys-69 and Cys-73 are nitrosylated in response to nitric oxide (NO). When two disulfide bonds are present in the protein, only Cys-73 is nitrosylated. Cys-73 can serve as donor for nitrosylation of target proteins.

It localises to the nucleus. The protein resides in the cytoplasm. Its subcellular location is the secreted. Participates in various redox reactions through the reversible oxidation of its active center dithiol to a disulfide and catalyzes dithiol-disulfide exchange reactions. Plays a role in the reversible S-nitrosylation of cysteine residues in target proteins, and thereby contributes to the response to intracellular nitric oxide. Nitrosylates the active site Cys of CASP3 in response to nitric oxide (NO), and thereby inhibits caspase-3 activity. Induces the FOS/JUN AP-1 DNA binding activity in ionizing radiation (IR) cells through its oxidation/reduction status and stimulates AP-1 transcriptional activity. The sequence is that of Thioredoxin (TXN) from Bos taurus (Bovine).